The following is a 55-amino-acid chain: Large ribosomal subunit protein bL33 (55 aa).

Belongs to the bacterial ribosomal protein bL33 family.

This is Large ribosomal subunit protein bL33 from Mycobacterium leprae (strain Br4923).